Here is a 421-residue protein sequence, read N- to C-terminus: Cyclin-A1 (421 aa).

Residues 1 to 21 (MHRQSSKSGVALPPVGQGPDA) are disordered.

Belongs to the cyclin family. Cyclin AB subfamily. In terms of assembly, interacts with INCA1 and KLHDC9. Interacts with the CDK2 and CDC2 protein kinases to form a serine/threonine kinase holoenzyme complex. The cyclin subunit imparts substrate specificity to the complex. Found in a complex with CDK2, CABLES1 and CCNE1. In terms of processing, polyubiquitinated via 'Lys-11'-linked ubiquitin by the anaphase-promoting complex (APC/C), leading to its degradation by the proteasome. Deubiquitinated and stabilized by USP37 enables entry into S phase. Ubiquitinated during the G1 phase by the SCF(FBXO31) complex, leading to its proteasomal degradation. In terms of tissue distribution, testis and ovaries.

It localises to the nucleus. Its subcellular location is the cytoplasm. The protein localises to the cytoskeleton. The protein resides in the spindle. May be involved in the control of the cell cycle at the G1/S (start) and G2/M (mitosis) transitions. May primarily function in the control of the germline meiotic cell cycle and additionally in the control of mitotic cell cycle in some somatic cells. The chain is Cyclin-A1 (Ccna1) from Mus musculus (Mouse).